The sequence spans 387 residues: Succinate--CoA ligase [ADP-forming] subunit beta (387 aa).

Residues 9 to 244 (KQLFAEYGIP…KTQEDETEVL (236 aa)) enclose the ATP-grasp domain. Residues Lys-46, 53–55 (GRG), Gly-102, and Glu-107 contribute to the ATP site. Asn-199 and Asp-213 together coordinate Mg(2+). Substrate is bound by residues Asn-264 and 321–323 (GIV).

It belongs to the succinate/malate CoA ligase beta subunit family. Heterotetramer of two alpha and two beta subunits. Mg(2+) is required as a cofactor.

It catalyses the reaction succinate + ATP + CoA = succinyl-CoA + ADP + phosphate. It carries out the reaction GTP + succinate + CoA = succinyl-CoA + GDP + phosphate. It functions in the pathway carbohydrate metabolism; tricarboxylic acid cycle; succinate from succinyl-CoA (ligase route): step 1/1. Succinyl-CoA synthetase functions in the citric acid cycle (TCA), coupling the hydrolysis of succinyl-CoA to the synthesis of either ATP or GTP and thus represents the only step of substrate-level phosphorylation in the TCA. The beta subunit provides nucleotide specificity of the enzyme and binds the substrate succinate, while the binding sites for coenzyme A and phosphate are found in the alpha subunit. This chain is Succinate--CoA ligase [ADP-forming] subunit beta, found in Xylella fastidiosa (strain 9a5c).